A 61-amino-acid polypeptide reads, in one-letter code: Large ribosomal subunit protein uL30 (61 aa).

Positions 1-20 (MSQKKVTVRQVGSPIGRKPE) are disordered.

Belongs to the universal ribosomal protein uL30 family. In terms of assembly, part of the 50S ribosomal subunit.

This is Large ribosomal subunit protein uL30 from Hyphomonas neptunium (strain ATCC 15444).